The sequence spans 247 residues: 2,3-bisphosphoglycerate-dependent phosphoglycerate mutase (247 aa).

Substrate is bound by residues 9 to 16 (RHGESEWN), 22 to 23 (TG), Arg-61, 88 to 91 (ERHY), Lys-99, 115 to 116 (RR), and 183 to 184 (GN). His-10 serves as the catalytic Tele-phosphohistidine intermediate. The active-site Proton donor/acceptor is the Glu-88.

It belongs to the phosphoglycerate mutase family. BPG-dependent PGAM subfamily.

It carries out the reaction (2R)-2-phosphoglycerate = (2R)-3-phosphoglycerate. It participates in carbohydrate degradation; glycolysis; pyruvate from D-glyceraldehyde 3-phosphate: step 3/5. Its function is as follows. Catalyzes the interconversion of 2-phosphoglycerate and 3-phosphoglycerate. This is 2,3-bisphosphoglycerate-dependent phosphoglycerate mutase from Nocardioides sp. (strain ATCC BAA-499 / JS614).